A 262-amino-acid polypeptide reads, in one-letter code: Proline-rich protein 23C (262 aa).

2 disordered regions span residues 1-52 and 225-262; these read MGSR…AGTP and VPSS…LFQE. Residues 226-242 show a composition bias toward pro residues; it reads PSSPLQPLPPSPSPGPH. Over residues 243–252 the composition is skewed to basic and acidic residues; it reads ARPELPERPP. Residues 253–262 show a composition bias toward basic residues; it reads CKVRRRLFQE.

It belongs to the PRR23 family.

In Homo sapiens (Human), this protein is Proline-rich protein 23C (PRR23C).